Reading from the N-terminus, the 404-residue chain is Cysteine desulfurase IscS (404 aa).

Pyridoxal 5'-phosphate contacts are provided by residues Ala-75–Thr-76, Asn-155, Gln-183, and Ser-203–His-205. Lys-206 is subject to N6-(pyridoxal phosphate)lysine. Thr-243 provides a ligand contact to pyridoxal 5'-phosphate. The active-site Cysteine persulfide intermediate is the Cys-328. Cys-328 provides a ligand contact to [2Fe-2S] cluster.

It belongs to the class-V pyridoxal-phosphate-dependent aminotransferase family. NifS/IscS subfamily. In terms of assembly, homodimer. Forms a heterotetramer with IscU, interacts with other sulfur acceptors. Pyridoxal 5'-phosphate is required as a cofactor.

It is found in the cytoplasm. It carries out the reaction (sulfur carrier)-H + L-cysteine = (sulfur carrier)-SH + L-alanine. Its pathway is cofactor biosynthesis; iron-sulfur cluster biosynthesis. In terms of biological role, master enzyme that delivers sulfur to a number of partners involved in Fe-S cluster assembly, tRNA modification or cofactor biosynthesis. Catalyzes the removal of elemental sulfur atoms from cysteine to produce alanine. Functions as a sulfur delivery protein for Fe-S cluster synthesis onto IscU, an Fe-S scaffold assembly protein, as well as other S acceptor proteins. The chain is Cysteine desulfurase IscS from Neisseria meningitidis serogroup C / serotype 2a (strain ATCC 700532 / DSM 15464 / FAM18).